The sequence spans 195 residues: ATP-dependent Clp protease proteolytic subunit (195 aa).

Ser-98 acts as the Nucleophile in catalysis. The active site involves His-123.

Belongs to the peptidase S14 family. As to quaternary structure, fourteen ClpP subunits assemble into 2 heptameric rings which stack back to back to give a disk-like structure with a central cavity, resembling the structure of eukaryotic proteasomes.

It localises to the cytoplasm. It carries out the reaction Hydrolysis of proteins to small peptides in the presence of ATP and magnesium. alpha-casein is the usual test substrate. In the absence of ATP, only oligopeptides shorter than five residues are hydrolyzed (such as succinyl-Leu-Tyr-|-NHMec, and Leu-Tyr-Leu-|-Tyr-Trp, in which cleavage of the -Tyr-|-Leu- and -Tyr-|-Trp bonds also occurs).. Its function is as follows. Cleaves peptides in various proteins in a process that requires ATP hydrolysis. Has a chymotrypsin-like activity. Plays a major role in the degradation of misfolded proteins. The polypeptide is ATP-dependent Clp protease proteolytic subunit (Helicobacter pylori (strain J99 / ATCC 700824) (Campylobacter pylori J99)).